The chain runs to 433 residues: Serine--tRNA ligase (433 aa).

Position 235-237 (235-237 (TSE)) interacts with L-serine. 266 to 268 (RSE) provides a ligand contact to ATP. Glutamate 289 contributes to the L-serine binding site. 353–356 (EISS) is an ATP binding site. Serine 388 provides a ligand contact to L-serine.

Belongs to the class-II aminoacyl-tRNA synthetase family. Type-1 seryl-tRNA synthetase subfamily. In terms of assembly, homodimer. The tRNA molecule binds across the dimer.

Its subcellular location is the cytoplasm. It carries out the reaction tRNA(Ser) + L-serine + ATP = L-seryl-tRNA(Ser) + AMP + diphosphate + H(+). The enzyme catalyses tRNA(Sec) + L-serine + ATP = L-seryl-tRNA(Sec) + AMP + diphosphate + H(+). Its pathway is aminoacyl-tRNA biosynthesis; selenocysteinyl-tRNA(Sec) biosynthesis; L-seryl-tRNA(Sec) from L-serine and tRNA(Sec): step 1/1. Functionally, catalyzes the attachment of serine to tRNA(Ser). Is also able to aminoacylate tRNA(Sec) with serine, to form the misacylated tRNA L-seryl-tRNA(Sec), which will be further converted into selenocysteinyl-tRNA(Sec). The polypeptide is Serine--tRNA ligase (Burkholderia orbicola (strain MC0-3)).